The primary structure comprises 834 residues: Striatin-interacting protein 2 (834 aa).

Residues 1-48 (MEDPAAPGTGGPPANGNGNGGGKGKQAAPKGREAFRSQRRESEGSVDC) are disordered. The segment covering 8–24 (GTGGPPANGNGNGGGKG) has biased composition (gly residues). Basic and acidic residues predominate over residues 30–43 (KGREAFRSQRRESE). Phosphoserine occurs at positions 318, 329, and 354. Positions 321–345 (SYTLDLGESQLAPPPSKLRGRRGSR) are disordered. The tract at residues 360–382 (ERDLFKTEEPATEEEEESAGDGE) is disordered. The span at 369 to 379 (PATEEEEESAG) shows a compositional bias: acidic residues.

This sequence belongs to the STRIP family. Part of the core of STRIPAK complexes composed of PP2A catalytic and scaffolding subunits, the striatins (PP2A regulatory subunits), the striatin-associated proteins MOB4, STRIP1 and STRIP2, PDCD10 and members of the STE20 kinases, such as STK24 and STK26. Interacts with CTTNBP2NL.

It localises to the cytoplasm. In terms of biological role, plays a role in the regulation of cell morphology and cytoskeletal organization. Required in the control of cell shape. Calmodulin-binding scaffolding protein which is the center of the striatin-interacting phosphatase and kinase (STRIPAK) complexes. STRIPAK complexes have critical roles in protein (de)phosphorylation and are regulators of multiple signaling pathways including Hippo, MAPK, nuclear receptor and cytoskeleton remodeling. Different types of STRIPAK complexes are involved in a variety of biological processes such as cell growth, differentiation, apoptosis, metabolism and immune regulation. This Homo sapiens (Human) protein is Striatin-interacting protein 2.